Consider the following 561-residue polypeptide: Shugoshin 1 (561 aa).

Residues 1-176 form a necessary for interaction with PPP2CA and PPP2R1A region; it reads MAKERCLKKS…DTLGVDFDSG (176 aa). The stretch at 7–89 forms a coiled coil; that stretch reads LKKSFQDSLE…DIILQLRKEC (83 aa). Serine 14 carries the post-translational modification Phosphoserine; by NEK2. Positions 192–200 match the D-box 1 motif; it reads RSSLKKHCN. Residue serine 256 is modified to Phosphoserine. Disordered stretches follow at residues 260-331 and 348-441; these read IQPG…SVSS and FRQK…HLSL. Residues 267–296 show a composition bias toward basic and acidic residues; that stretch reads KTKEDILESKSEQTKSKQRDTQERKREEKR. The stretch at 273–313 forms a coiled coil; that stretch reads LESKSEQTKSKQRDTQERKREEKRKANRRKSKRMSKYKENK. Positions 297-307 are enriched in basic residues; that stretch reads KANRRKSKRMS. The span at 308–318 shows a compositional bias: basic and acidic residues; that stretch reads KYKENKSENKK. Residues 310–312 carry the KEN box motif; the sequence is KEN. Residues 364–375 show a composition bias toward low complexity; it reads SEVSLCESSGSG. Residues 388-398 show a composition bias toward polar residues; sequence YIQNPTSNSDR. Residues 410–421 are compositionally biased toward basic and acidic residues; that stretch reads KYTDEKETEGSK. The span at 422–433 shows a compositional bias: low complexity; it reads PTKTPTTTPPET. Serine 436 is subject to Phosphoserine. The D-box 2 motif lies at 438 to 446; that stretch reads HLSLKDITN. Residues 451 to 455 carry the PXVXL/I motif motif; that stretch reads PVVKI. Residues 457–465 carry the D-box 3 motif; sequence RLSLSPKKN. A Phosphoserine; by NEK2 modification is found at serine 507.

It belongs to the shugoshin family. In terms of assembly, interacts with PPP2CA (or PPP2CB), PPP2R1B, PPP2R5A, PPP2R5B, PPP2R5C, PPP2R5D, PPP2R5E, SET, LRRC59, RBM10 (or RBM5), RPL10A, RPL28, RPL7, RPL7A and RPLP1. Interaction with protein phosphatase 2A occurs most probably through direct binding to the regulatory B56 subunits: PPP2R1B, PPP2R5A, PPP2R5B, PPP2R5C, PPP2R5D, PPP2R5E. Interacts with PPP2R1A and NEK2. Isoform 3 interacts with PLK1. Interacts with CDCA8. Post-translationally, ubiquitinated and degraded during mitotic exit by APC/C-Cdh1. In terms of processing, phosphorylation by NEK2 is essential for chromosome congression in mitosis and for the proper attachment of spindle microtubule to the kinetochore. Phosphorylated by PLK1 and AUKRB. In terms of tissue distribution, widely expressed. Highly expressed in testis. Expressed in lung, small intestine, breast, liver and placenta. Strongly overexpressed in 90% of breast cancers tested.

The protein resides in the nucleus. The protein localises to the chromosome. Its subcellular location is the centromere. It localises to the kinetochore. It is found in the cytoplasm. The protein resides in the cytoskeleton. The protein localises to the spindle pole. Its subcellular location is the microtubule organizing center. It localises to the centrosome. It is found in the nucleus speckle. In terms of biological role, plays a central role in chromosome cohesion during mitosis by preventing premature dissociation of cohesin complex from centromeres after prophase, when most of cohesin complex dissociates from chromosomes arms. May act by preventing phosphorylation of the STAG2 subunit of cohesin complex at the centromere, ensuring cohesin persistence at centromere until cohesin cleavage by ESPL1/separase at anaphase. Essential for proper chromosome segregation during mitosis and this function requires interaction with PPP2R1A. Its phosphorylated form is necessary for chromosome congression and for the proper attachment of spindle microtubule to the kinetochore. Necessary for kinetochore localization of PLK1 and CENPF. May play a role in the tension sensing mechanism of the spindle-assembly checkpoint by regulating PLK1 kinetochore affinity. Isoform 3 plays a role in maintaining centriole cohesion involved in controlling spindle pole integrity. Involved in centromeric enrichment of AUKRB in prometaphase. This is Shugoshin 1 from Homo sapiens (Human).